A 316-amino-acid chain; its full sequence is Pantothenate kinase (316 aa).

95-102 (GSVAVGKS) contributes to the ATP binding site.

It belongs to the prokaryotic pantothenate kinase family.

It localises to the cytoplasm. It carries out the reaction (R)-pantothenate + ATP = (R)-4'-phosphopantothenate + ADP + H(+). It participates in cofactor biosynthesis; coenzyme A biosynthesis; CoA from (R)-pantothenate: step 1/5. This chain is Pantothenate kinase, found in Klebsiella pneumoniae (strain 342).